Here is a 206-residue protein sequence, read N- to C-terminus: Thymidylate kinase (206 aa).

7–14 (GGEGSGKS) serves as a coordination point for ATP.

This sequence belongs to the thymidylate kinase family.

The catalysed reaction is dTMP + ATP = dTDP + ADP. Functionally, phosphorylation of dTMP to form dTDP in both de novo and salvage pathways of dTTP synthesis. The polypeptide is Thymidylate kinase (tmk) (Chlamydia pneumoniae (Chlamydophila pneumoniae)).